The following is a 282-amino-acid chain: Elongation factor Ts (282 aa).

An involved in Mg(2+) ion dislocation from EF-Tu region spans residues Thr-80–Val-83.

Belongs to the EF-Ts family.

It localises to the cytoplasm. In terms of biological role, associates with the EF-Tu.GDP complex and induces the exchange of GDP to GTP. It remains bound to the aminoacyl-tRNA.EF-Tu.GTP complex up to the GTP hydrolysis stage on the ribosome. The polypeptide is Elongation factor Ts (Chlamydia caviae (strain ATCC VR-813 / DSM 19441 / 03DC25 / GPIC) (Chlamydophila caviae)).